We begin with the raw amino-acid sequence, 145 residues long: Protein ImpA (145 aa).

Catalysis depends on for autocatalytic cleavage activity residues serine 64 and lysine 101.

The protein belongs to the peptidase S24 family.

Involved in UV protection and mutation. This chain is Protein ImpA, found in Escherichia coli.